We begin with the raw amino-acid sequence, 408 residues long: Peptidase T (408 aa).

His-78 contributes to the Zn(2+) binding site. Asp-80 is a catalytic residue. Asp-140 provides a ligand contact to Zn(2+). The active-site Proton acceptor is the Glu-173. Residues Glu-174, Asp-196, and His-379 each coordinate Zn(2+).

This sequence belongs to the peptidase M20B family. Requires Zn(2+) as cofactor.

The protein resides in the cytoplasm. The catalysed reaction is Release of the N-terminal residue from a tripeptide.. Cleaves the N-terminal amino acid of tripeptides. This chain is Peptidase T, found in Escherichia coli (strain UTI89 / UPEC).